The following is a 230-amino-acid chain: U2 small nuclear ribonucleoprotein A' (230 aa).

LRR repeat units lie at residues 15 to 36, 48 to 69, 71 to 92, 93 to 114, and 115 to 136; these read SLRN…NADT, GDRE…GVTE, HYTS…PRLE, TLRT…KNIA, and KLET…ESLK. Residues 149-187 enclose the LRRCT domain; that stretch reads NPVQHVPRYRSYMISILPSLRMLDFQRVTQKERDEAEAM.

It belongs to the U2 small nuclear ribonucleoprotein A family. In terms of assembly, associated with the spliceosome.

The protein resides in the nucleus. Its function is as follows. Involved in pre-mRNA splicing. The sequence is that of U2 small nuclear ribonucleoprotein A' (LEA1) from Yarrowia lipolytica (strain CLIB 122 / E 150) (Yeast).